A 359-amino-acid polypeptide reads, in one-letter code: 4-galactosyl-N-acetylglucosaminide 3-alpha-L-fucosyltransferase FUT6 (359 aa).

Residues 1-14 (MDPLGPAKTQWSWR) are Cytoplasmic-facing. The helical; Signal-anchor for type II membrane protein transmembrane segment at 15–34 (CCLTALLFQLLVAVCFFSYL) threads the bilayer. Residues 35–359 (RVSRDDPTVY…QTRSIAAWFT (325 aa)) are Lumenal-facing. A determines site-specific fucosylation region spans residues 73–112 (KPIALPRCSEMVPGTADCNITADRKVYPQADAVIVHHREV). N91, N153, and N184 each carry an N-linked (GlcNAc...) asparagine glycan.

The protein belongs to the glycosyltransferase 10 family. In terms of assembly, homodimer and monomer. Monomer (secreted form). N-glycosylated. Post-translationally, proteolytic cleavage releases a secreted glycoform of 43 kDa.

It is found in the golgi apparatus. The protein localises to the golgi stack membrane. Its subcellular location is the secreted. It carries out the reaction a beta-D-galactosyl-(1-&gt;4)-N-acetyl-beta-D-glucosaminyl derivative + GDP-beta-L-fucose = a beta-D-galactosyl-(1-&gt;4)-[alpha-L-fucosyl-(1-&gt;3)]-N-acetyl-beta-D-glucosaminyl derivative + GDP + H(+). It catalyses the reaction an N-acetyl-alpha-neuraminyl-(2-&gt;3)-beta-D-galactosyl-(1-&gt;4)-N-acetyl-beta-D-glucosaminyl derivative + GDP-beta-L-fucose = an alpha-Neu5Ac-(2-&gt;3)-beta-D-Gal-(1-&gt;4)-[alpha-L-Fuc-(1-&gt;3)]-beta-D-GlcNAc derivative + GDP + H(+). The catalysed reaction is an alpha-Neu5Ac-(2-&gt;3)-beta-D-Gal-(1-&gt;4)-beta-D-GlcNAc-(1-&gt;3)-beta-D-Gal-(1-&gt;4)-[alpha-L-Fuc-(1-&gt;3)]-beta-D-GlcNAc derivative + GDP-beta-L-fucose = an alpha-Neu5Ac-(2-&gt;3)-beta-D-Gal-(1-&gt;4)-[alpha-L-Fuc-(1-&gt;3)]-beta-D-GlcNAc-(1-&gt;3)-beta-D-Gal-(1-&gt;4)-[alpha-L-Fuc-(1-&gt;3)]-beta-D-GlcNAc derivative + GDP + H(+). The enzyme catalyses a neolactoside nLc6Cer + GDP-beta-L-fucose = beta-D-Gal-(1-&gt;4)-[alpha-L-Fuc-(1-&gt;3)]-beta-D-GlcNAc-(1-&gt;3)-beta-D-Gal-(1-&gt;4)-beta-D-GlcNAc-(1-&gt;3)-beta-D-Gal-(1-&gt;4)-beta-D-Glc-(1&lt;-&gt;1')-Cer + GDP + H(+). It carries out the reaction a neolactoside nLc6Cer + GDP-beta-L-fucose = beta-D-galactosyl-(1-&gt;4)-N-acetyl-beta-D-glucosaminyl-(1-&gt;3)-beta-D-galactosyl-(1-&gt;4)-[alpha-L-fucosyl-(1-&gt;3)]-N-acetyl-beta-D-glucosaminyl-(1-&gt;3)-beta-D-galactosyl-(1-&gt;4)-beta-D-glucosyl-(1&lt;-&gt;1')-ceramide + GDP + H(+). It catalyses the reaction a neolactoside VI(3)-alpha-NeuNAc-nLc6Cer + GDP-beta-L-fucose = a neolactoside VI(3)-alpha-NeuAc,V(3)-alphaFuc-nLc6Cer + GDP + H(+). The catalysed reaction is beta-D-galactosyl-(1-&gt;4)-N-acetyl-D-glucosamine + GDP-beta-L-fucose = beta-D-galactosyl-(1-&gt;4)-[alpha-L-fucosyl-(1-&gt;3)]-N-acetyl-D-glucosamine + GDP + H(+). The enzyme catalyses N-acetyl-alpha-neuraminosyl-(2-&gt;3)-beta-D-galactosyl-(1-&gt;4)-N-acetyl-beta-D-glucosamine + GDP-beta-L-fucose = N-acetyl-alpha-neuraminosyl-(2-&gt;3)-beta-D-galactosyl-(1-&gt;4)-[alpha-L-fucosyl-(1-&gt;3)]-N-acetyl-beta-D-glucosamine + GDP + H(+). It carries out the reaction lactose + GDP-beta-L-fucose = beta-D-galactosyl-(1-&gt;4)-[alpha-L-fucosyl-(1-&gt;3)]-D-glucose + GDP + H(+). It catalyses the reaction alpha-L-Fuc-(1-&gt;2)-beta-D-Gal-(1-&gt;4)-D-Glc + GDP-beta-L-fucose = alpha-L-Fuc-(1-&gt;2)-beta-D-Gal-(1-&gt;4)-[alpha-L-Fuc-(1-&gt;3)]-D-Glc + GDP + H(+). The catalysed reaction is a beta-D-galactosyl-(1-&gt;4)-N-acetyl-beta-D-6-sulfooxy-glucosaminyl derivative + GDP-beta-L-fucose = a beta-D-galactosyl-(1-&gt;4)-[alpha-L-fucosyl-(1-&gt;3)]-N-acetyl-beta-D-6-sulfooxy-glucosaminyl derivative + GDP + H(+). It functions in the pathway protein modification; protein glycosylation. Functionally, catalyzes the transfer of L-fucose, from a guanosine diphosphate-beta-L-fucose, to the N-acetyl glucosamine (GlcNAc) of a distal alpha2,3 sialylated lactosamine unit of a glycoprotein- or glycolipid-linked sialopolylactosamines chain or of a distal or internal lactosamine unit of a neutral glycoprotein- or glycolipid-linked polylactosamines chain through an alpha-1,3 glycosidic linkage and participates in surface expression of the sialyl Lewis X (sLe(x)), Lewis X (Le(x)) and non sialylated VIM2 determinants. Moreover transfers fucose to H-type 2 (Fucalpha1-2Galbeta1-4GlcNAc) chain acceptor substrates and participates in difucosylated sialyl Lewis x determinants. Also fucosylates a polylactosamine substrate having a 6 sulfate modification at the GlcNAc moiety and gives rise to sialyl and non-sialyl 6-sulfo lewis X. Does not have activity towards type 1 ((Galbeta1-3GlcNAc)) and H-type 1 chain (Fucalpha1-2Galbeta1-3GlcNAc) acceptors substrates. The protein is 4-galactosyl-N-acetylglucosaminide 3-alpha-L-fucosyltransferase FUT6 of Pongo pygmaeus (Bornean orangutan).